The sequence spans 312 residues: Olfactory receptor 7G3 (312 aa).

Residues 1 to 25 (MKAGNFSDTPEFFLLGLSGDPELQP) are Extracellular-facing. A glycan (N-linked (GlcNAc...) asparagine) is linked at N5. A helical membrane pass occupies residues 26–46 (ILFMLFLSMYLATMLGNLLII). Residues 47-54 (LAVNSDSH) are Cytoplasmic-facing. Residues 55–75 (LHTPMYFLLSILSLVDICFTS) form a helical membrane-spanning segment. Topologically, residues 76–99 (TTMPKMLVNIQAQAQSINYTGCLT) are extracellular. N93 carries an N-linked (GlcNAc...) asparagine glycan. C97 and C189 are oxidised to a cystine. A helical transmembrane segment spans residues 100 to 120 (QICFVLVFVGLENGILVMMAY). Residues 121–139 (DRFVAICHPLRYNVIMNPK) lie on the Cytoplasmic side of the membrane. Residues 140–160 (LCGLLLLLSFIVSVLDALLHT) traverse the membrane as a helical segment. The Extracellular segment spans residues 161–197 (LMVLQLTFCIDLEIPHFFCELAHILKLACSDVLINNI). A helical transmembrane segment spans residues 198 to 217 (LVYLVTSLLGVVPLSGIIFS). Residues 218 to 237 (YTRIVSSVMKIPSAGGKYKA) lie on the Cytoplasmic side of the membrane. The chain crosses the membrane as a helical span at residues 238-258 (FSICGSHLIVVSLFYGTGFGV). Topologically, residues 259 to 271 (YLSSGATHSSRKG) are extracellular. The helical transmembrane segment at 272 to 292 (AIASVMYTVVTPMLNPLIYSL) threads the bilayer. Residues 293–312 (RNKDMLKALRKLISRIPSFH) are Cytoplasmic-facing.

This sequence belongs to the G-protein coupled receptor 1 family.

The protein resides in the cell membrane. Its function is as follows. Odorant receptor. The chain is Olfactory receptor 7G3 (OR7G3) from Homo sapiens (Human).